Reading from the N-terminus, the 1003-residue chain is NACHT, LRR and PYD domains-containing protein 9B (1003 aa).

One can recognise a Pyrin domain in the interval 1–91 (MAGSSGYGLL…SIMAQKKKRH (91 aa)). The NACHT domain maps to 143–465 (VTAIVAGTTG…QDKDICVPVI (323 aa)). 149–156 (GTTGEGKT) contacts ATP. LRR repeat units follow at residues 749 to 770 (KVKHLSLVENPLKNKGVMSLCE), 778 to 799 (VLQSLMLSYCCLTFIACGHLYE), 806 to 826 (HLSLLDLGSNFLEDTGVNLLC), 835 to 856 (TLKELWLPGCFLTSQCCEEISA), 863 to 883 (NLKTLKLGNNNIQDTGVRQLC), 892 to 913 (NLECLGLDLCEFTSDCCKDLAL), and 920 to 940 (TLNSLNLDWKTLDHSGLVVLC).

As to quaternary structure, sensor component of NLRP9 inflammasomes. Inflammasomes are supramolecular complexes that assemble in the cytosol in response to pathogens, such as rotavirus, but not encephalomyocarditis virus (EMCV), and play critical roles in innate immunity and inflammation. The core of NLRP9 inflammasomes consists of a signal sensor component (NLRP9), an adapter (ASC/PYCARD), which recruits an effector pro-inflammatory caspase (CASP1). Within the complex, NLRP9 and PYCARD interact via their respective DAPIN/pyrin domains. This interaction initiates speck formation (nucleation) which greatly enhances further addition of soluble PYCARD molecules to the speck in a prion-like polymerization process. Clustered PYCARD nucleates the formation of CASP1 filaments through the interaction of their respective CARD domains, acting as a platform for CASP1 polymerization. CASP1 filament formation increases local enzyme concentration, resulting in trans-autocleavage and activation. Active CASP1 then processes IL1B and IL18 precursors, leading to the release of mature cytokines in the extracellular milieu and inflammatory response. Interacts with DHX9 upon rotavirus infection; this interaction may trigger inflammasome activation and inflammatory response. Predominantly expressed in the intestine, including proximal and distal colon, cecum, ileum, jejunum and duodenum (at protein level). In the ileum, expressed in epithelial cells. Also expressed in oocytes at all follicular stages and in preimplantation embryos (at protein level). Although expression decreases in preimplantation embryos, it is still detectable in blastocyts.

The protein localises to the cytoplasm. The protein resides in the inflammasome. As the sensor component of the NLRP9 inflammasome, plays a crucial role in innate immunity and inflammation. In response to pathogens, including rotavirus, initiates the formation of the inflammasome polymeric complex, made of NLRP9, PYCARD and CASP1. Recruitment of proCASP1 to the inflammasome promotes its activation and CASP1-catalyzed IL1B and IL18 maturation and release in the extracellular milieu. The active cytokines stimulate inflammatory responses. Inflammasomes can also induce pyroptosis, an inflammatory form of programmed cell death. NLRP9 inflammasome activation may be initiated by DHX9 interaction with viral double-stranded RNA (dsRNA), preferentially to short dsRNA segments. The protein is NACHT, LRR and PYD domains-containing protein 9B (Nlrp9b) of Mus musculus (Mouse).